We begin with the raw amino-acid sequence, 513 residues long: Histidine ammonia-lyase (513 aa).

A cross-link (5-imidazolinone (Ala-Gly)) is located at residues 146-148 (ASG). Ser-147 is subject to 2,3-didehydroalanine (Ser).

Belongs to the PAL/histidase family. Contains an active site 4-methylidene-imidazol-5-one (MIO), which is formed autocatalytically by cyclization and dehydration of residues Ala-Ser-Gly.

Its subcellular location is the cytoplasm. The catalysed reaction is L-histidine = trans-urocanate + NH4(+). The protein operates within amino-acid degradation; L-histidine degradation into L-glutamate; N-formimidoyl-L-glutamate from L-histidine: step 1/3. This is Histidine ammonia-lyase from Caulobacter vibrioides (strain NA1000 / CB15N) (Caulobacter crescentus).